A 354-amino-acid polypeptide reads, in one-letter code: S-adenosylmethionine-dependent nucleotide dehydratase RSAD2 (354 aa).

A Radical SAM core domain is found at 62 to 282; that stretch reads AMTPTSVNYH…LDRHSSISCL (221 aa). Residues C76, C80, and C83 each contribute to the [4Fe-4S] cluster site.

It belongs to the radical SAM superfamily. RSAD2 family. [4Fe-4S] cluster is required as a cofactor. As to expression, constitutively expressed in spleen, head kidney and trunk kidney. Following viral infection, detected in most organs including liver, gill, intestine, heart, muscle and brain.

It is found in the endoplasmic reticulum membrane. Interferon-inducible iron-sulfur (4FE-4S) cluster-binding antiviral protein which plays a major role in the cell antiviral state induced by type I and type II interferon. The sequence is that of S-adenosylmethionine-dependent nucleotide dehydratase RSAD2 from Siniperca chuatsi (Mandarin fish).